The sequence spans 269 residues: Membrane protein insertase YidC 1 (269 aa).

An N-terminal signal peptide occupies residues 1 to 20 (MKKKFSLIAMAGAALLLLTA). A lipid anchor (N-palmitoyl cysteine) is attached at C21. C21 carries S-diacylglycerol cysteine lipidation. 4 consecutive transmembrane segments (helical) span residues 45-65 (IRFL…TIVI), 124-144 (YMGC…YQAL), 165-185 (PTFI…YLMM), and 203-223 (PIFI…YWVI).

It belongs to the OXA1/ALB3/YidC family. Type 2 subfamily.

The protein resides in the cell membrane. Its function is as follows. Required for the insertion and/or proper folding and/or complex formation of integral membrane proteins into the membrane. Involved in integration of membrane proteins that insert both dependently and independently of the Sec translocase complex, as well as at least some lipoproteins. This is Membrane protein insertase YidC 1 from Lactococcus lactis subsp. lactis (strain IL1403) (Streptococcus lactis).